A 181-amino-acid polypeptide reads, in one-letter code: CASP-like protein UU-1 (181 aa).

At 1 to 30 (MTMELESQEVVVETTTAAAAARAASAAHVR) the chain is on the cytoplasmic side. The helical transmembrane segment at 31-51 (TTVALRLLAFAASLAAAVVVA) threads the bilayer. At 52 to 65 (TNRQERWGITVTFK) the chain is on the extracellular side. Residues 66 to 86 (MFAVWEAFVAINFACAAYALL) form a helical membrane-spanning segment. Over 87–107 (TAVFVKKLVSKHWLHHMDQFT) the chain is Cytoplasmic. A helical membrane pass occupies residues 108–128 (VNLQAASTAGAGAVGSVAMWG). The Extracellular segment spans residues 129–147 (NEPSGWYAVCRLYRLYCDR). The chain crosses the membrane as a helical span at residues 148 to 168 (GAVSLALAFVAFVAFGVASSL). Residues 169-181 (SRYPRAPPPPAPR) are Cytoplasmic-facing.

The protein belongs to the Casparian strip membrane proteins (CASP) family. As to quaternary structure, homodimer and heterodimers.

Its subcellular location is the cell membrane. This chain is CASP-like protein UU-1, found in Sorghum bicolor (Sorghum).